A 314-amino-acid chain; its full sequence is Methionyl-tRNA formyltransferase (314 aa).

A (6S)-5,6,7,8-tetrahydrofolate-binding site is contributed by 112 to 115 (SLLP).

The protein belongs to the Fmt family.

The catalysed reaction is L-methionyl-tRNA(fMet) + (6R)-10-formyltetrahydrofolate = N-formyl-L-methionyl-tRNA(fMet) + (6S)-5,6,7,8-tetrahydrofolate + H(+). In terms of biological role, attaches a formyl group to the free amino group of methionyl-tRNA(fMet). The formyl group appears to play a dual role in the initiator identity of N-formylmethionyl-tRNA by promoting its recognition by IF2 and preventing the misappropriation of this tRNA by the elongation apparatus. The sequence is that of Methionyl-tRNA formyltransferase from Legionella pneumophila subsp. pneumophila (strain Philadelphia 1 / ATCC 33152 / DSM 7513).